A 509-amino-acid chain; its full sequence is Maturase K (509 aa).

The protein belongs to the intron maturase 2 family. MatK subfamily.

The protein resides in the plastid. Its subcellular location is the chloroplast. Usually encoded in the trnK tRNA gene intron. Probably assists in splicing its own and other chloroplast group II introns. The chain is Maturase K from Dalea purpurea (Violet prairie clover).